The sequence spans 114 residues: Large ribosomal subunit protein bL19 (114 aa).

Belongs to the bacterial ribosomal protein bL19 family.

Its function is as follows. This protein is located at the 30S-50S ribosomal subunit interface and may play a role in the structure and function of the aminoacyl-tRNA binding site. This chain is Large ribosomal subunit protein bL19, found in Heliobacterium modesticaldum (strain ATCC 51547 / Ice1).